We begin with the raw amino-acid sequence, 497 residues long: Glycerol kinase (497 aa).

T13 provides a ligand contact to ADP. ATP is bound by residues T13, T14, and S15. Position 13 (T13) interacts with sn-glycerol 3-phosphate. Residue R17 coordinates ADP. R83, E84, and Y135 together coordinate sn-glycerol 3-phosphate. Residues R83, E84, and Y135 each contribute to the glycerol site. H231 is modified (phosphohistidine; by HPr). D245 provides a ligand contact to sn-glycerol 3-phosphate. Positions 245 and 246 each coordinate glycerol. Positions 267 and 310 each coordinate ADP. ATP-binding residues include T267, G310, Q314, and G411. Positions 411 and 415 each coordinate ADP.

It belongs to the FGGY kinase family. As to quaternary structure, homotetramer and homodimer (in equilibrium). In terms of processing, the phosphoenolpyruvate-dependent sugar phosphotransferase system (PTS), including enzyme I, and histidine-containing protein (HPr) are required for the phosphorylation, which leads to the activation of the enzyme.

The catalysed reaction is glycerol + ATP = sn-glycerol 3-phosphate + ADP + H(+). It participates in polyol metabolism; glycerol degradation via glycerol kinase pathway; sn-glycerol 3-phosphate from glycerol: step 1/1. Its activity is regulated as follows. Activated by phosphorylation and inhibited by fructose 1,6-bisphosphate (FBP). Functionally, key enzyme in the regulation of glycerol uptake and metabolism. Catalyzes the phosphorylation of glycerol to yield sn-glycerol 3-phosphate. This is Glycerol kinase from Halalkalibacterium halodurans (strain ATCC BAA-125 / DSM 18197 / FERM 7344 / JCM 9153 / C-125) (Bacillus halodurans).